A 228-amino-acid chain; its full sequence is MGQKVHPTGIRLGIVKEHTSVWYADGATYADYLLKDLKTREYLQDKLKSASVSRIDIHRPAQTARITIHTARPGIVIGKKGEDVEKLRQDLTKQMGVPVHINIEEIRKPELDAMLVAQSVAQQLERRVMFRRAMKRAVQNAMRIGAKGIKIQVSGRLGGAEIARTEWYREGRVPLHTLRADIDYNTYEAHTTYGVIGVKVWIFKGEVIGGRQEELKPQAPAPRKKAAK.

One can recognise a KH type-2 domain in the interval 39–107; the sequence is TREYLQDKLK…PVHINIEEIR (69 aa).

Belongs to the universal ribosomal protein uS3 family. Part of the 30S ribosomal subunit. Forms a tight complex with proteins S10 and S14.

In terms of biological role, binds the lower part of the 30S subunit head. Binds mRNA in the 70S ribosome, positioning it for translation. This is Small ribosomal subunit protein uS3 from Pseudomonas putida (strain ATCC 700007 / DSM 6899 / JCM 31910 / BCRC 17059 / LMG 24140 / F1).